A 603-amino-acid polypeptide reads, in one-letter code: Trihelix transcription factor DF1 (603 aa).

The 59-residue stretch at 60–118 folds into the Myb-like 1 domain; sequence NRWPRQETLALLKIRSDMGIAFRDASVKGPLWEEVSRKMAEHGYIRNAKKCKEKFENVY. Disordered stretches follow at residues 149 to 201, 220 to 249, 333 to 408, and 532 to 603; these read QSTT…SSIP, LSDN…TRKK, KQPN…SSSR, and QWPP…TNNL. 4 stretches are compositionally biased toward low complexity: residues 168-178, 189-198, 221-236, and 344-362; these read NNNNNNNNNNN, TTVMPTLPSS, SDNS…TSSD, and PQQV…QQPP. Positions 363 to 376 are enriched in pro residues; it reads QRSPPPQPPAPLPQ. The span at 381 to 408 shows a compositional bias: polar residues; sequence VVSTLDTTKTDNGGDQNMTPAASASSSR. Residues 401–465 enclose the Myb-like 2 domain; sequence AASASSSRWP…RCKEKWENIN (65 aa). Residues 532-555 are compositionally biased toward low complexity; that stretch reads QWPPAVTTATTTPAAAQPDQQSQP. Residues 559-586 are compositionally biased toward acidic residues; that stretch reads NFDDEEGTDEEYDDEDEEEENEEEEGGE. Low complexity predominate over residues 593–603; the sequence is NNNNNKTTNNL.

The protein localises to the nucleus. Transcription repressor that negatively regulates root hair growth by directly binding RSL4 promoter and repressing RSL4 expression. Required for the synthesis of seed coat mucilage. The chain is Trihelix transcription factor DF1 from Arabidopsis thaliana (Mouse-ear cress).